The primary structure comprises 194 residues: GTP cyclohydrolase-2 (194 aa).

50–54 lines the GTP pocket; the sequence is RIHSE. The Zn(2+) site is built by Cys-55, Cys-66, and Cys-68. Residues 94-96 and Thr-116 each bind GTP; that span reads EGR. Asp-128 (proton acceptor) is an active-site residue. Catalysis depends on Arg-130, which acts as the Nucleophile. Residues Thr-151 and Lys-156 each coordinate GTP.

This sequence belongs to the GTP cyclohydrolase II family. Zn(2+) is required as a cofactor.

The catalysed reaction is GTP + 4 H2O = 2,5-diamino-6-hydroxy-4-(5-phosphoribosylamino)-pyrimidine + formate + 2 phosphate + 3 H(+). Its pathway is cofactor biosynthesis; riboflavin biosynthesis; 5-amino-6-(D-ribitylamino)uracil from GTP: step 1/4. In terms of biological role, catalyzes the conversion of GTP to 2,5-diamino-6-ribosylamino-4(3H)-pyrimidinone 5'-phosphate (DARP), formate and pyrophosphate. The chain is GTP cyclohydrolase-2 from Helicobacter hepaticus (strain ATCC 51449 / 3B1).